Reading from the N-terminus, the 155-residue chain is Altered inheritance rate of mitochondria protein 29 (155 aa).

Serine 78 is subject to Phosphoserine.

It belongs to the UPF0538 family.

The protein resides in the cytoplasm. Its function is as follows. May be involved in mitochondrial organization and biogenesis. This Saccharomyces cerevisiae (strain ATCC 204508 / S288c) (Baker's yeast) protein is Altered inheritance rate of mitochondria protein 29 (AIM29).